The sequence spans 546 residues: Chaperonin GroEL (546 aa).

ATP is bound by residues 30-33 (TLGP), Lys-51, 87-91 (DGTTT), Gly-415, and Asp-496. The tract at residues 526-546 (PQKDAPAGGGMPDMGGMGGMM) is disordered. Residues 532 to 546 (AGGGMPDMGGMGGMM) are compositionally biased toward gly residues.

It belongs to the chaperonin (HSP60) family. In terms of assembly, forms a cylinder of 14 subunits composed of two heptameric rings stacked back-to-back. Interacts with the co-chaperonin GroES.

It localises to the cytoplasm. The enzyme catalyses ATP + H2O + a folded polypeptide = ADP + phosphate + an unfolded polypeptide.. In terms of biological role, together with its co-chaperonin GroES, plays an essential role in assisting protein folding. The GroEL-GroES system forms a nano-cage that allows encapsulation of the non-native substrate proteins and provides a physical environment optimized to promote and accelerate protein folding. The sequence is that of Chaperonin GroEL from Ruegeria pomeroyi (strain ATCC 700808 / DSM 15171 / DSS-3) (Silicibacter pomeroyi).